Here is a 265-residue protein sequence, read N- to C-terminus: MLAKRVIPCLDVRDGQVVKGVKFRNHEIIGDILPLAKRYAESGADELVFYDITASADGRTVDKSWVERVAREINIPFTVAGGIRSVEHAQTMLSMGADKISINSPALLNPNLINTLVEEFGQQCIVIGIDSFYNEQSGEYEVHQFTGDESKSHKSAWQTKDWLQEVISRGAGEIVLNCMNQDGVRQGYDIAQLSALRGHCSVPLIASGGAGEIQHFVDAFQKAQVDGALAASVFHKNLFSISEVKAAMAANNIAVRPIEALQETT.

Catalysis depends on residues aspartate 11 and aspartate 130.

This sequence belongs to the HisA/HisF family. Heterodimer of HisH and HisF.

The protein localises to the cytoplasm. The enzyme catalyses 5-[(5-phospho-1-deoxy-D-ribulos-1-ylimino)methylamino]-1-(5-phospho-beta-D-ribosyl)imidazole-4-carboxamide + L-glutamine = D-erythro-1-(imidazol-4-yl)glycerol 3-phosphate + 5-amino-1-(5-phospho-beta-D-ribosyl)imidazole-4-carboxamide + L-glutamate + H(+). It participates in amino-acid biosynthesis; L-histidine biosynthesis; L-histidine from 5-phospho-alpha-D-ribose 1-diphosphate: step 5/9. IGPS catalyzes the conversion of PRFAR and glutamine to IGP, AICAR and glutamate. The HisF subunit catalyzes the cyclization activity that produces IGP and AICAR from PRFAR using the ammonia provided by the HisH subunit. The polypeptide is Imidazole glycerol phosphate synthase subunit HisF (Idiomarina loihiensis (strain ATCC BAA-735 / DSM 15497 / L2-TR)).